Consider the following 565-residue polypeptide: MLLAQINRDSQAMAEFPGGGGEAQHVTLCLTEAVADGESMDTMEGMSLQAVTLADGSTAYIQHNTKDGKLIEGQVIQLEDGSAAYVQHVPKGDDLSLEDGQAVQLEDGTTAYIHHSSKDSYDQSSVQAVQLEDGTTAYIHHAVQVPQSDTILAIQADGTVAGLHTGEASIDPDTISALEQYAAKVSIEGGEGAGSNALINESESEKKMQIVLSHGARLPIKAQQTNEKAFRCDYEGCGKLYTTAHHLKVHERSHTGDRPYQCDHGSCRKAFATGYGLKSHVRTHTGEKPYRCSEENCTKSFKTSGDLQKHVRTHTGERPFKCPFEGCGRSFTTSNIRKVHIRTHTGERPYYCSEPGCGRAFASATNYKNHVRIHTGEKPYVCTVPGCDKRFTEYSSLYKHHVVHTHSKPYNCNHCGKTYKQISTLAMHKRTAHNDTEPIEEDQESFFVPQPPDEVIKGSQITYVTGVDGEDGISATQSGQQLALIAQDGTSHVAIVAQDLSAFHNSETGPQHSHNLGGSDSRPVTLLATSNGRQIAVQIGEQQSLEEAIRIASRIQQGESPGMED.

7 consecutive C2H2-type zinc fingers follow at residues 230-254, 260-284, 290-314, 320-344, 350-374, 380-404, and 410-433; these read FRCDYEGCGKLYTTAHHLKVHERSH, YQCDHGSCRKAFATGYGLKSHVRTH, YRCSEENCTKSFKTSGDLQKHVRTH, FKCPFEGCGRSFTTSNIRKVHIRTH, YYCSEPGCGRAFASATNYKNHVRIH, YVCTVPGCDKRFTEYSSLYKHHVVH, and YNCNHCGKTYKQISTLAMHKRTAH.

This sequence belongs to the GLI C2H2-type zinc-finger protein family.

The protein resides in the nucleus. Its function is as follows. Transcriptional activator. Activates the gene for selenocysteine tRNA (tRNAsec). Binds to the activator element (AE) motif of the selenocysteine tRNA gene promoter. The polypeptide is Zinc finger protein 143 (znf143) (Xenopus laevis (African clawed frog)).